We begin with the raw amino-acid sequence, 310 residues long: UDP-N-acetylenolpyruvoylglucosamine reductase (310 aa).

In terms of domain architecture, FAD-binding PCMH-type spans 34–213 (RAGGNAEVLF…LRRMNEITSS (180 aa)). The active site involves R178. S227 (proton donor) is an active-site residue. Residue E297 is part of the active site.

This sequence belongs to the MurB family. It depends on FAD as a cofactor.

Its subcellular location is the cytoplasm. The catalysed reaction is UDP-N-acetyl-alpha-D-muramate + NADP(+) = UDP-N-acetyl-3-O-(1-carboxyvinyl)-alpha-D-glucosamine + NADPH + H(+). It participates in cell wall biogenesis; peptidoglycan biosynthesis. In terms of biological role, cell wall formation. This chain is UDP-N-acetylenolpyruvoylglucosamine reductase, found in Parvibaculum lavamentivorans (strain DS-1 / DSM 13023 / NCIMB 13966).